Reading from the N-terminus, the 185-residue chain is Elongation factor P (185 aa).

Belongs to the elongation factor P family.

Its subcellular location is the cytoplasm. The protein operates within protein biosynthesis; polypeptide chain elongation. Its function is as follows. Involved in peptide bond synthesis. Stimulates efficient translation and peptide-bond synthesis on native or reconstituted 70S ribosomes in vitro. Probably functions indirectly by altering the affinity of the ribosome for aminoacyl-tRNA, thus increasing their reactivity as acceptors for peptidyl transferase. This Nitrosomonas eutropha (strain DSM 101675 / C91 / Nm57) protein is Elongation factor P.